The following is an 861-amino-acid chain: ToMV susceptible protein tm-2 (861 aa).

Positions 63–83 (VKNLLKDIQELAGDVEDLLDD) form a coiled coil. Residues 162–388 (DDFNMLQAKL…LESMGHKVQD (227 aa)) enclose the NB-ARC domain. 185–192 (GMPGLGKT) is a binding site for ATP. LRR repeat units lie at residues 225-248 (LDIA…NLRS), 305-327 (LHAL…IFNF), 388-411 (DGCA…CFLY), 449-472 (LAED…TYNG), 510-536 (VARL…KLEK), 585-608 (MTCL…IVKL), 609-631 (TRLE…VWES), 652-680 (ISSF…FFEP), 689-713 (LRKL…PVPK), 735-758 (YPKI…AFPP), 781-804 (LPKL…LSGE), and 810-835 (FPQL…DVSM).

Belongs to the disease resistance NB-LRR family. In terms of assembly, (Microbial infection) Fails to interact with the tobamovirus mouvement protein of tobacco mosaic virus (TMV).

The protein localises to the cell membrane. Functionally, potential inhibitor of viral mouvements which may confer resistance to some tobamoviruses but not to the tomato mosaic virus (ToMV) and tobacco mosaic virus (TMV). The sequence is that of ToMV susceptible protein tm-2 from Solanum lycopersicum (Tomato).